Here is a 306-residue protein sequence, read N- to C-terminus: Large ribosomal subunit protein mL45 (306 aa).

Residues 287–306 (LKPEEEYEEAQGEAQKPQLA) form a disordered region.

Belongs to the mitochondrion-specific ribosomal protein mL45 family. Component of the mitochondrial large ribosomal subunit (mt-LSU). Mature mammalian 55S mitochondrial ribosomes consist of a small (28S) and a large (39S) subunit. The 28S small subunit contains a 12S ribosomal RNA (12S mt-rRNA) and 30 different proteins. The 39S large subunit contains a 16S rRNA (16S mt-rRNA), a copy of mitochondrial valine transfer RNA (mt-tRNA(Val)), which plays an integral structural role, and 52 different proteins.

The protein resides in the mitochondrion. In terms of biological role, component of the mitochondrial large ribosomal subunit (mt-LSU). Within the mitochondrial ribosomes, required to direct the nascent polypeptide toward the tunnel exit and position the exit at a distance from the membrane surface. This chain is Large ribosomal subunit protein mL45, found in Homo sapiens (Human).